A 301-amino-acid chain; its full sequence is Formylmethanofuran--tetrahydromethanopterin formyltransferase (301 aa).

The protein belongs to the FTR family. As to quaternary structure, homotetramer.

It localises to the cytoplasm. It catalyses the reaction N-formylmethanofuran + 5,6,7,8-tetrahydromethanopterin + H(+) = N(5)-formyl-5,6,7,8-tetrahydromethanopterin + methanofuran. It functions in the pathway one-carbon metabolism; methanogenesis from CO(2); 5,10-methenyl-5,6,7,8-tetrahydromethanopterin from CO(2): step 2/3. Its function is as follows. Catalyzes the reversible transfer of a formyl group from formylmethanofuran (formyl-MFR) to tetrahydromethanopterin (H(4)MPT) to produce 5-formyl tetrahydromethanopterin (5-formyl-H(4)MPT) and methanofuran (MFR). The sequence is that of Formylmethanofuran--tetrahydromethanopterin formyltransferase from Methanocaldococcus jannaschii (strain ATCC 43067 / DSM 2661 / JAL-1 / JCM 10045 / NBRC 100440) (Methanococcus jannaschii).